The following is a 1383-amino-acid chain: WD repeat-containing protein dyf-2 (1383 aa).

WD repeat units follow at residues 32-71 (EHGS…IDAL), 72-112 (NPTG…TDTV), 118-157 (SSKE…RIAV), 160-198 (KHQR…VSTT), and 337-376 (ETEK…LAAS). 7 TPR repeats span residues 756–789 (EEKN…MEAL), 810–847 (PKEI…NPQN), 885–918 (RVVK…DRAA), 940–973 (PKIH…DNQV), 996–1029 (IEGA…QEAF), 1031–1053 (LAEK…NISQ), and 1064–1097 (VNDM…ENCV).

Component of the IFT complex A (IFT-A) composed of at least che-11, daf-10, dyf-2, ift-139, ift-43 and ifta-1. In terms of tissue distribution, expressed in ciliated sensory neurons.

The protein localises to the cell projection. Its subcellular location is the cilium. In terms of biological role, component of the IFT complex A (IFT-A), a complex required for retrograde ciliary transport. Moves along the ciliary axoneme and is involved in the assembly, localization and the movement of other intraflagellar transport (IFT) proteins along the cilia axoneme. May also associate with the BBSome complex in order to mediate ciliary transport. Regulates cilia biogenesis, morphology and sensitivity to environmental cues. This is WD repeat-containing protein dyf-2 from Caenorhabditis elegans.